A 595-amino-acid chain; its full sequence is DNA primase (595 aa).

A CHC2-type zinc finger spans residues 38-62 (CPFHQEKTPSFTVSNSKRFFYCFGC). Residues 250–332 (NHSILVEGYF…EKKISFIRLP (83 aa)) form the Toprim domain. Positions 256, 300, and 302 each coordinate Mg(2+).

It belongs to the DnaG primase family. As to quaternary structure, monomer. Interacts with DnaB. It depends on Zn(2+) as a cofactor. Mg(2+) is required as a cofactor.

The enzyme catalyses ssDNA + n NTP = ssDNA/pppN(pN)n-1 hybrid + (n-1) diphosphate.. RNA polymerase that catalyzes the synthesis of short RNA molecules used as primers for DNA polymerase during DNA replication. This chain is DNA primase, found in Rickettsia conorii (strain ATCC VR-613 / Malish 7).